The chain runs to 135 residues: Glutaredoxin-C5 (135 aa).

Positions 29–134 (AERVERLASE…PLLKEAGALW (106 aa)) constitute a Glutaredoxin domain. Cysteines 49 and 52 form a disulfide. The Responsive for interaction with TGA factors signature appears at 132–135 (ALWL).

Belongs to the glutaredoxin family. CC-type subfamily.

It localises to the cytoplasm. Its subcellular location is the nucleus. Functionally, has a glutathione-disulfide oxidoreductase activity in the presence of NADPH and glutathione reductase. Reduces low molecular weight disulfides and proteins. The polypeptide is Glutaredoxin-C5 (GRXC5) (Oryza sativa subsp. japonica (Rice)).